A 147-amino-acid polypeptide reads, in one-letter code: Hemoglobin subunit epsilon (147 aa).

In terms of domain architecture, Globin spans 3–147; the sequence is HFTAEEKSTI…VATALAHKYH (145 aa). 2 positions are modified to phosphoserine: serine 14 and serine 51. Heme b is bound by residues histidine 64 and histidine 93.

The protein belongs to the globin family. Heterotetramer of two alpha chains and two epsilon chains in early embryonic hemoglobin Gower-2; two zeta chains and two epsilon chains in early embryonic hemoglobin Gower-1. As to expression, red blood cells.

In terms of biological role, the epsilon chain is a beta-type chain of early mammalian embryonic hemoglobin. This chain is Hemoglobin subunit epsilon (HBE1), found in Propithecus verreauxi (White sifaka).